Here is a 1246-residue protein sequence, read N- to C-terminus: Putative helicase L115 (1246 aa).

Residues 1 to 21 (MSKTITKKVNKKTKKSTKINP) are disordered. Residues 872–1030 (AKFTDGYHGF…YYMLKMLQTG (159 aa)) enclose the Helicase ATP-binding domain. Position 885–892 (885–892 (SDVGSGKT)) interacts with ATP.

The chain is Putative helicase L115 from Acanthamoeba polyphaga (Amoeba).